A 254-amino-acid chain; its full sequence is 3-deoxy-manno-octulosonate cytidylyltransferase (254 aa).

It belongs to the KdsB family.

It is found in the cytoplasm. It catalyses the reaction 3-deoxy-alpha-D-manno-oct-2-ulosonate + CTP = CMP-3-deoxy-beta-D-manno-octulosonate + diphosphate. It functions in the pathway nucleotide-sugar biosynthesis; CMP-3-deoxy-D-manno-octulosonate biosynthesis; CMP-3-deoxy-D-manno-octulosonate from 3-deoxy-D-manno-octulosonate and CTP: step 1/1. Its pathway is bacterial outer membrane biogenesis; lipopolysaccharide biosynthesis. Its function is as follows. Activates KDO (a required 8-carbon sugar) for incorporation into bacterial lipopolysaccharide in Gram-negative bacteria. This is 3-deoxy-manno-octulosonate cytidylyltransferase from Chlamydia trachomatis serovar L2 (strain ATCC VR-902B / DSM 19102 / 434/Bu).